A 395-amino-acid polypeptide reads, in one-letter code: Leucine aminopeptidase 1 (395 aa).

The first 19 residues, 1 to 19, serve as a signal peptide directing secretion; the sequence is MKHLSLLALAAVAPTTALA. The propeptide occupies 20-95; sequence GVIDHQQVTF…SVKSFEQTKV (76 aa). Residue asparagine 187 is glycosylated (N-linked (GlcNAc...) asparagine). Zn(2+) contacts are provided by histidine 195, aspartate 214, glutamate 253, and aspartate 280. Cysteine 329 and cysteine 333 are disulfide-bonded. Histidine 362 lines the Zn(2+) pocket.

This sequence belongs to the peptidase M28 family. M28E subfamily. In terms of assembly, monomer. The cofactor is Zn(2+).

The protein localises to the secreted. Its function is as follows. Extracellular aminopeptidase that allows assimilation of proteinaceous substrates. In Uncinocarpus reesii (strain UAMH 1704), this protein is Leucine aminopeptidase 1 (LAP1).